A 382-amino-acid chain; its full sequence is Protein PEP-RELATED DEVELOPMENT ARRESTED 1 homolog, chloroplastic (382 aa).

A chloroplast-targeting transit peptide spans 1-44 (MAILPLSISHSLTSALSATSSGIGRPVARLLHPRVPSRPTVICL).

The protein localises to the plastid. It is found in the chloroplast stroma. Its subcellular location is the chloroplast nucleoid. Plays an essential role in early steps of chloroplast development. May be involved in the redox control of plastid gene expression by maintening the redox state around chloroplast nucleoids. May positively regulate plastid-encoded RNA polymerase (PEP) activity. In Oryza sativa subsp. japonica (Rice), this protein is Protein PEP-RELATED DEVELOPMENT ARRESTED 1 homolog, chloroplastic.